We begin with the raw amino-acid sequence, 379 residues long: Putative zinc metalloprotease sll0528 (379 aa).

The next 2 membrane-spanning stretches (helical) occupy residues 20–40 and 54–74; these read LFGI…LVTL and GGTP…SVVA. H75 contacts Zn(2+). E76 is an active-site residue. Position 79 (H79) interacts with Zn(2+). A run of 3 helical transmembrane segments spans residues 115-135, 148-168, and 212-232; these read FAVA…LTIV, IIGL…IPGL, and GILN…WFLL. CBS domains follow at residues 257–315 and 322–379; these read VIPN…DWPQ and MQYP…TSAA.

Belongs to the peptidase M50B family. Zn(2+) serves as cofactor.

The protein resides in the cell membrane. The protein is Putative zinc metalloprotease sll0528 of Synechocystis sp. (strain ATCC 27184 / PCC 6803 / Kazusa).